Reading from the N-terminus, the 328-residue chain is DNA-directed RNA polymerase subunit alpha (328 aa).

The tract at residues 1-231 is alpha N-terminal domain (alpha-NTD); the sequence is MIYQMQMPAK…EHVAFFADFS (231 aa). Positions 252 to 328 are alpha C-terminal domain (alpha-CTD); sequence MRKLLNTKIE…MDITKYQMKG (77 aa).

It belongs to the RNA polymerase alpha chain family. Homodimer. The RNAP catalytic core consists of 2 alpha, 1 beta, 1 beta' and 1 omega subunit. When a sigma factor is associated with the core the holoenzyme is formed, which can initiate transcription.

It catalyses the reaction RNA(n) + a ribonucleoside 5'-triphosphate = RNA(n+1) + diphosphate. In terms of biological role, DNA-dependent RNA polymerase catalyzes the transcription of DNA into RNA using the four ribonucleoside triphosphates as substrates. This Chlorobium phaeovibrioides (strain DSM 265 / 1930) (Prosthecochloris vibrioformis (strain DSM 265)) protein is DNA-directed RNA polymerase subunit alpha.